The chain runs to 861 residues: Probable linoleate 9S-lipoxygenase 3 (861 aa).

Positions 33 to 160 constitute a PLAT domain; sequence FTDLASSLTG…NYKSDRIFFA (128 aa). The Lipoxygenase domain occupies 163 to 861; that stretch reads PYLPSDTPEL…GKGIPNSVSI (699 aa). The segment at 220–247 is disordered; sequence TLGGSAEYPYPRRGRTGRPPTRTDPKSE. 5 residues coordinate Fe cation: His522, His527, His713, Asn717, and Ile861.

The protein belongs to the lipoxygenase family. Monomer. It depends on Fe cation as a cofactor. In terms of tissue distribution, expressed in tubers and roots. Not detected in leaves, flowers, stems, shoot tips, or axillary buds.

The protein localises to the cytoplasm. The catalysed reaction is (9Z,12Z)-octadecadienoate + O2 = (9S)-hydroperoxy-(10E,12Z)-octadecadienoate. It functions in the pathway lipid metabolism; oxylipin biosynthesis. In terms of biological role, plant lipoxygenases may be involved in a number of diverse aspects of plant physiology including growth and development, pest resistance, and senescence or responses to wounding. Catalyzes the hydroperoxidation of lipids containing a cis,cis-1,4-pentadiene structure. This Solanum tuberosum (Potato) protein is Probable linoleate 9S-lipoxygenase 3 (LOX1.3).